Reading from the N-terminus, the 362-residue chain is G-protein coupled receptor homolog US27 (362 aa).

Residues Met-1–Arg-34 are Virion surface-facing. 4 N-linked (GlcNAc...) asparagine; by host glycosylation sites follow: Asn-7, Asn-15, Asn-18, and Asn-22. Residues Leu-35–Tyr-58 form a helical membrane-spanning segment. The Intravirion portion of the chain corresponds to Arg-59–Asp-67. Residues Thr-68 to Tyr-90 traverse the membrane as a helical segment. The Virion surface portion of the chain corresponds to Ala-91–Ser-104. A helical transmembrane segment spans residues Gly-105–Met-126. The Intravirion segment spans residues Asp-127 to Thr-148. Residues Cys-149–Leu-167 form a helical membrane-spanning segment. Residues Met-168 to Asn-193 lie on the Virion surface side of the membrane. A helical transmembrane segment spans residues Thr-194 to Asn-213. Topologically, residues Arg-214–Val-233 are intravirion. The helical transmembrane segment at Leu-234 to Ile-257 threads the bilayer. The Virion surface segment spans residues Arg-258 to Phe-274. Residues Cys-275 to Gly-298 traverse the membrane as a helical segment. At Thr-299–Leu-362 the chain is on the intravirion side. A disordered region spans residues Thr-341–Leu-362.

The protein belongs to the G-protein coupled receptor 1 family. Heterodimer with US28. Interacts with host Gi alpha-1 subunit GNAI1; this interaction does not lead to the catalytic activation of Gi complex.

It is found in the virion. Its subcellular location is the host cell membrane. Functionally, interacts with the host Gi complex without activating it, thereby probably interfering with the chemokine-Gi signaling. May also function as a G protein sink to sequester G protein from the cell surface via internalization. Plays an important role in spread of HCMV via the extracellular route. The protein is G-protein coupled receptor homolog US27 (US27) of Homo sapiens (Human).